The following is a 227-amino-acid chain: UPF0758 protein Spro_4842 (227 aa).

Positions 105–227 constitute an MPN domain; that stretch reads AMLNPRMTQH…CVSFAERGWL (123 aa). Zn(2+) contacts are provided by His-176, His-178, and Asp-189. The JAMM motif motif lies at 176-189; it reads HNHPSGKAEPSHAD.

This sequence belongs to the UPF0758 family. YicR subfamily.

This Serratia proteamaculans (strain 568) protein is UPF0758 protein Spro_4842.